We begin with the raw amino-acid sequence, 690 residues long: Methionine--tRNA ligase (690 aa).

The 'HIGH' region motif lies at 20 to 30 (PYANGSIHLGH). Residues Cys-151, Cys-154, Cys-164, and Cys-167 each coordinate Zn(2+). Residues 337–341 (KMSKS) carry the 'KMSKS' region motif. Lys-340 serves as a coordination point for ATP. The 102-residue stretch at 589-690 (DFAKVDLRIA…EGAQPGMRVM (102 aa)) folds into the tRNA-binding domain.

Belongs to the class-I aminoacyl-tRNA synthetase family. MetG type 1 subfamily. As to quaternary structure, homodimer. Requires Zn(2+) as cofactor.

It is found in the cytoplasm. The catalysed reaction is tRNA(Met) + L-methionine + ATP = L-methionyl-tRNA(Met) + AMP + diphosphate. Functionally, is required not only for elongation of protein synthesis but also for the initiation of all mRNA translation through initiator tRNA(fMet) aminoacylation. The sequence is that of Methionine--tRNA ligase from Vibrio vulnificus (strain YJ016).